Reading from the N-terminus, the 482-residue chain is tRNA sulfurtransferase (482 aa).

One can recognise a THUMP domain in the interval 61–165; sequence LAIRDALTRI…DDRLLLIKGR (105 aa). ATP-binding positions include 183–184, lysine 265, glycine 287, and glutamine 296; that span reads LI. A disulfide bridge links cysteine 344 with cysteine 456. Residues 404-482 form the Rhodanese domain; it reads FGPNDVILDI…GFNNVKVYRP (79 aa). Cysteine 456 acts as the Cysteine persulfide intermediate in catalysis.

Belongs to the ThiI family.

It is found in the cytoplasm. It catalyses the reaction [ThiI sulfur-carrier protein]-S-sulfanyl-L-cysteine + a uridine in tRNA + 2 reduced [2Fe-2S]-[ferredoxin] + ATP + H(+) = [ThiI sulfur-carrier protein]-L-cysteine + a 4-thiouridine in tRNA + 2 oxidized [2Fe-2S]-[ferredoxin] + AMP + diphosphate. It carries out the reaction [ThiS sulfur-carrier protein]-C-terminal Gly-Gly-AMP + S-sulfanyl-L-cysteinyl-[cysteine desulfurase] + AH2 = [ThiS sulfur-carrier protein]-C-terminal-Gly-aminoethanethioate + L-cysteinyl-[cysteine desulfurase] + A + AMP + 2 H(+). It participates in cofactor biosynthesis; thiamine diphosphate biosynthesis. In terms of biological role, catalyzes the ATP-dependent transfer of a sulfur to tRNA to produce 4-thiouridine in position 8 of tRNAs, which functions as a near-UV photosensor. Also catalyzes the transfer of sulfur to the sulfur carrier protein ThiS, forming ThiS-thiocarboxylate. This is a step in the synthesis of thiazole, in the thiamine biosynthesis pathway. The sulfur is donated as persulfide by IscS. The protein is tRNA sulfurtransferase of Escherichia coli O45:K1 (strain S88 / ExPEC).